A 221-amino-acid polypeptide reads, in one-letter code: Thiamine-phosphate synthase (221 aa).

Residues 41–45 and Asn82 contribute to the 4-amino-2-methyl-5-(diphosphooxymethyl)pyrimidine site; that span reads QLRDK. Mg(2+) contacts are provided by Asp83 and Asp102. Residue Ser120 participates in 4-amino-2-methyl-5-(diphosphooxymethyl)pyrimidine binding. 146–148 serves as a coordination point for 2-[(2R,5Z)-2-carboxy-4-methylthiazol-5(2H)-ylidene]ethyl phosphate; the sequence is TPT. Residue Lys149 coordinates 4-amino-2-methyl-5-(diphosphooxymethyl)pyrimidine. Residue Gly177 participates in 2-[(2R,5Z)-2-carboxy-4-methylthiazol-5(2H)-ylidene]ethyl phosphate binding.

The protein belongs to the thiamine-phosphate synthase family. The cofactor is Mg(2+).

The catalysed reaction is 2-[(2R,5Z)-2-carboxy-4-methylthiazol-5(2H)-ylidene]ethyl phosphate + 4-amino-2-methyl-5-(diphosphooxymethyl)pyrimidine + 2 H(+) = thiamine phosphate + CO2 + diphosphate. It catalyses the reaction 2-(2-carboxy-4-methylthiazol-5-yl)ethyl phosphate + 4-amino-2-methyl-5-(diphosphooxymethyl)pyrimidine + 2 H(+) = thiamine phosphate + CO2 + diphosphate. The enzyme catalyses 4-methyl-5-(2-phosphooxyethyl)-thiazole + 4-amino-2-methyl-5-(diphosphooxymethyl)pyrimidine + H(+) = thiamine phosphate + diphosphate. It functions in the pathway cofactor biosynthesis; thiamine diphosphate biosynthesis; thiamine phosphate from 4-amino-2-methyl-5-diphosphomethylpyrimidine and 4-methyl-5-(2-phosphoethyl)-thiazole: step 1/1. In terms of biological role, condenses 4-methyl-5-(beta-hydroxyethyl)thiazole monophosphate (THZ-P) and 2-methyl-4-amino-5-hydroxymethyl pyrimidine pyrophosphate (HMP-PP) to form thiamine monophosphate (TMP). The sequence is that of Thiamine-phosphate synthase from Mycolicibacterium vanbaalenii (strain DSM 7251 / JCM 13017 / BCRC 16820 / KCTC 9966 / NRRL B-24157 / PYR-1) (Mycobacterium vanbaalenii).